A 263-amino-acid chain; its full sequence is Copper homeostasis protein cutC homolog (263 aa).

The protein belongs to the CutC family.

Functionally, involved in copper homeostasis. In Drosophila melanogaster (Fruit fly), this protein is Copper homeostasis protein cutC homolog.